Here is a 373-residue protein sequence, read N- to C-terminus: Histidinol-phosphate aminotransferase (373 aa).

Lys-233 carries the N6-(pyridoxal phosphate)lysine modification.

It belongs to the class-II pyridoxal-phosphate-dependent aminotransferase family. Histidinol-phosphate aminotransferase subfamily. As to quaternary structure, homodimer. It depends on pyridoxal 5'-phosphate as a cofactor.

It catalyses the reaction L-histidinol phosphate + 2-oxoglutarate = 3-(imidazol-4-yl)-2-oxopropyl phosphate + L-glutamate. Its pathway is amino-acid biosynthesis; L-histidine biosynthesis; L-histidine from 5-phospho-alpha-D-ribose 1-diphosphate: step 7/9. The chain is Histidinol-phosphate aminotransferase from Nitratidesulfovibrio vulgaris (strain DP4) (Desulfovibrio vulgaris).